A 228-amino-acid chain; its full sequence is Carbonic anhydrase (228 aa).

Zn(2+) is bound by residues C56, D58, H112, and C115.

This sequence belongs to the beta-class carbonic anhydrase family. Zn(2+) serves as cofactor.

The catalysed reaction is hydrogencarbonate + H(+) = CO2 + H2O. Its function is as follows. Catalyzes the reversible hydration of CO(2) to H(2)CO(3). The main role may be to provide inorganic carbon for the bicarbonate-dependent carboxylation reactions catalyzed by pyruvate carboxylase, acetyl-CoA carboxylase and carbamoyl-phosphate synthetase. Involved in osmoadaptation. The sequence is that of Carbonic anhydrase from Emericella nidulans (strain FGSC A4 / ATCC 38163 / CBS 112.46 / NRRL 194 / M139) (Aspergillus nidulans).